Consider the following 247-residue polypeptide: uncharacterized protein (247 aa).

Low complexity-rich tracts occupy residues 1–12 (MFSPQQPMRNYP) and 21–43 (PNQR…AQQQ). 2 disordered regions span residues 1–43 (MFSP…AQQQ) and 157–247 (LSKS…RLYI). Basic and acidic residues-rich tracts occupy residues 170–196 (ESEK…DGNK) and 210–229 (KTTD…KKEA).

This is an uncharacterized protein from Bacillus subtilis (strain 168).